We begin with the raw amino-acid sequence, 256 residues long: Putative F-box protein At3g51171 (256 aa).

The F-box domain maps to 1 to 44 (MVPLPWELEEDILSRLAAQSLVRFRSVCKRWNYLFDEKSFIKNH).

This chain is Putative F-box protein At3g51171, found in Arabidopsis thaliana (Mouse-ear cress).